A 310-amino-acid chain; its full sequence is Transcription initiation factor IIB (310 aa).

The TFIIB-type zinc finger occupies Asp-9 to Asp-41. Positions 14, 17, 33, and 36 each coordinate Zn(2+). 2 tandem repeats follow at residues Ser-127–Leu-210 and Asp-221–Glu-302.

Belongs to the TFIIB family.

In terms of biological role, stabilizes TBP binding to an archaeal box-A promoter. Also responsible for recruiting RNA polymerase II to the pre-initiation complex (DNA-TBP-TFIIB). This is Transcription initiation factor IIB from Methanobrevibacter smithii (strain ATCC 35061 / DSM 861 / OCM 144 / PS).